Consider the following 159-residue polypeptide: Small ribosomal subunit protein uS9 (159 aa).

Belongs to the universal ribosomal protein uS9 family.

The sequence is that of Small ribosomal subunit protein uS9 from Rickettsia rickettsii (strain Iowa).